The primary structure comprises 54 residues: U1-ctenitoxin-Pr1a (54 aa).

Cystine bridges form between Cys-2/Cys-19, Cys-9/Cys-25, Cys-16/Cys-51, Cys-18/Cys-39, and Cys-27/Cys-37.

In terms of tissue distribution, expressed by the venom gland.

The protein localises to the secreted. In terms of biological role, omega-agatoxins are antagonists of voltage-gated calcium channels (Cav). Causes rapid general flaccid paralysis followed by death in 10-30 minutes when injected in mice at dose levels of 5 ug per mouse. This is U1-ctenitoxin-Pr1a from Phoneutria reidyi (Brazilian Amazonian armed spider).